A 234-amino-acid chain; its full sequence is Thiamine import ATP-binding protein ThiQ (234 aa).

In terms of domain architecture, ABC transporter spans 2 to 230 (LVLDDVQYTY…HPSKTLQAFV (229 aa)). 32-39 (GPSGAGKS) contributes to the ATP binding site.

This sequence belongs to the ABC transporter superfamily. Thiamine importer (TC 3.A.1.19.1) family. In terms of assembly, the complex is composed of two ATP-binding proteins (ThiQ), two transmembrane proteins (ThiP) and a solute-binding protein (ThiB).

The protein resides in the cell inner membrane. It carries out the reaction thiamine(out) + ATP + H2O = thiamine(in) + ADP + phosphate + H(+). Its function is as follows. Part of the ABC transporter complex ThiBPQ involved in thiamine import. Responsible for energy coupling to the transport system. The chain is Thiamine import ATP-binding protein ThiQ from Vibrio parahaemolyticus serotype O3:K6 (strain RIMD 2210633).